Here is a 555-residue protein sequence, read N- to C-terminus: Formate--tetrahydrofolate ligase (555 aa).

The protein belongs to the formate--tetrahydrofolate ligase family.

The enzyme catalyses (6S)-5,6,7,8-tetrahydrofolate + formate + ATP = (6R)-10-formyltetrahydrofolate + ADP + phosphate. The protein operates within one-carbon metabolism; tetrahydrofolate interconversion. In Porphyromonas gingivalis (strain ATCC BAA-308 / W83), this protein is Formate--tetrahydrofolate ligase.